Consider the following 495-residue polypeptide: Fusicoccadiene 8-ol C-16 hydroxylase (495 aa).

The chain crosses the membrane as a helical span at residues 12-32 (VLLALIVWIGTTIIYNIYFHP). N-linked (GlcNAc...) asparagine glycosylation is found at asparagine 249 and asparagine 317. Position 439 (cysteine 439) interacts with heme.

Belongs to the cytochrome P450 family. It depends on heme as a cofactor.

It is found in the membrane. The protein operates within mycotoxin biosynthesis. Functionally, cytochrome P450 monooxygenase; part of the gene cluster that mediates the biosynthesis of the diterpene glucoside brassicicene C. In the first step of the brassicicene C biosynthesis, the bifunctional diterpene synthase bsc8 that possesses both prenyl transferase and terpene cyclase activity, converts isopentenyl diphosphate and dimethylallyl diphosphate into geranylgeranyl diphosphate (GGDP) that is further converted into fusicocca-2,10(14)-diene, the first precursor for brassicicene C. Fusicocca-2,10(14)-diene is then substrate of cytochrome P450 monooxygenase bsc1 for hydroxylation at the C-8 position. Oxidation at C-16 position to aldehyde is then catalyzed by the cytochrome P450 monooyxygenase bsc7, yielding fusicocca-2,10(14)-diene-8-beta,16-diol. Follows the isomerization of the double bond and reduction of aldehyde to alcohol catalyzed by the short-chain dehydrogenase/reductase bsc3 to yield the diol compound fusicocca-1,10(14)-diene-8 beta,16-diol. The next step is the oxidation at the C-3 position of fusicocca-2,10(14)-diene-8-beta,16-diol catalyzed by the alpha-ketoglutarate dependent dioxygenase bsc9, to produce a triol compound. Methylation of the hydroxy group at position 16 is performed by the methyltransferase bsc6. 16-O-methylation is followed by oxidation at the C-13 position to ketone and an alkyl shift of the methyl group leads to brassicicene C. Although the probable acetyltransferase bsc4 is included in the gene cluster, no acetylation reactions are necessary for brassicicene C biosynthesis. However, the fact that brassicicene E, which is a structurally related compound having an acetoxy group at position 12, was previously isolated from another strain of A.brassicicola suggests that the ATCC 96836 strain might also produce a small amount of brassicicene E. This Alternaria brassicicola (Dark leaf spot agent) protein is Fusicoccadiene 8-ol C-16 hydroxylase.